We begin with the raw amino-acid sequence, 664 residues long: Transmembrane protein 201 (664 aa).

Methionine 1 is subject to N-acetylmethionine. The Nuclear portion of the chain corresponds to 1 to 214; the sequence is MEGVSALLAS…SSSAVKAPFQ (214 aa). The chain crosses the membrane as a helical span at residues 215-235; it reads VILLRALAFLACAFLLFTTLY. The Perinuclear space portion of the chain corresponds to 236-297; the sequence is GPSEPFTPGA…EAWAFGQSHQ (62 aa). The span at 245-261 shows a compositional bias: low complexity; the sequence is AALPPALPPGGNSSAAS. Positions 245 to 264 are disordered; it reads AALPPALPPGGNSSAASDNT. The helical transmembrane segment at 298 to 318 threads the bilayer; sequence TSIVAVGLLTCLLAMLLAGRI. The Nuclear segment spans residues 319 to 322; that stretch reads RLRR. Residues 323 to 343 form a helical membrane-spanning segment; the sequence is IDAFSTCLWALLLGLHLAEHY. Over 344 to 356 the chain is Perinuclear space; the sequence is LQAASPGWLDTLK. A helical transmembrane segment spans residues 357–374; sequence FSTTSLCCLVGFTAAVAT. The Nuclear portion of the chain corresponds to 375 to 642; sequence RKSTGPRRFR…ARVSPSLVRG (268 aa). A phosphoserine mark is found at serine 441, serine 444, serine 450, serine 454, serine 466, serine 477, and serine 480. Residues 502–522 form a disordered region; it reads PLPSPAPSVASSVASSSGSLR. Low complexity predominate over residues 508-520; sequence PSVASSVASSSGS. Serine 529 carries the phosphoserine modification. Residues 544–629 are disordered; it reads SSPGEAPNTP…TTKGCSEETT (86 aa). 2 stretches are compositionally biased toward basic and acidic residues: residues 578-587 and 595-608; these read HTRDTKHTME and DSAR…KEDE. The span at 610 to 628 shows a compositional bias: polar residues; that stretch reads SQSSTCVVDTTTKGCSEET. The helical transmembrane segment at 643-663 threads the bilayer; the sequence is LLAVSLAVNALFTSAYLYQSL. Residue arginine 664 is a topological domain, perinuclear space.

The protein belongs to the TMEM201 family. In terms of assembly, isoform 2 interacts with EMD. Isoform 3 interacts with SUN2 and LMNA. May bind to Ran GTPase; has a greater affinity for Ran-GTP over Ran-GDP.

The protein localises to the nucleus inner membrane. Its function is as follows. Critical regulator of angiogenesis and endothelial cell (EC) migration. Promotes the migration of endothelial cells, which is essential for angiogenesis. Interacts with the linker of nucleoskeleton and cytoskeleton (LINC) complex, which plays a vital role in connecting the cell's cytoskeleton to the nuclear envelope. This interaction is essential for maintaining cellular structure and facilitating the movement of endothelial cells, which is critical for proper vascular development. Involved in nuclear movement during fibroblast polarization and migration. May recruit Ran GTPase to the nuclear periphery. Functionally, may define a distinct membrane domain in the vicinity of the mitotic spindle. Involved in the organization of the nuclear envelope implicating EMD, SUN1 and A-type lamina. In terms of biological role, proposed to be involved in actin-dependent nuclear movement; via SUN2 associates with transmembrane actin-associated nuclear (TAN) lines which are bound to F-actin cables and couple the nucleus to retrograde actin flow. The sequence is that of Transmembrane protein 201 (Tmem201) from Mus musculus (Mouse).